Consider the following 501-residue polypeptide: Cytochrome P450 76M5 (501 aa).

A helical transmembrane segment spans residues 5 to 25 (ELWVLAAALAVSLLYYLAALM). Position 443 (C443) interacts with heme.

This sequence belongs to the cytochrome P450 family. Heme is required as a cofactor.

It localises to the membrane. The catalysed reaction is ent-sandaracopimaradien-3beta-ol + reduced [NADPH--hemoprotein reductase] + O2 = oryzalexin E + oxidized [NADPH--hemoprotein reductase] + H2O + H(+). Enzyme of the diterpenoid metabolism involved in the biosynthesis of the oryzalexin class of phytoalexins. Hydroxylates ent-sandaracopimaradien. The polypeptide is Cytochrome P450 76M5 (Oryza sativa subsp. japonica (Rice)).